The sequence spans 146 residues: Large ribosomal subunit protein uL15 (146 aa).

Positions 1–56 are disordered; that stretch reads MRLHDLRPVPGSRQKPTRKGQGIGSGLGKTAGRGQKGQKARSGGGVRPGFEGGQMP. Composition is skewed to gly residues over residues 21 to 35 and 42 to 52; these read QGIG…GRGQ and SGGGVRPGFEG.

This sequence belongs to the universal ribosomal protein uL15 family. In terms of assembly, part of the 50S ribosomal subunit.

In terms of biological role, binds to the 23S rRNA. The sequence is that of Large ribosomal subunit protein uL15 from Carboxydothermus hydrogenoformans (strain ATCC BAA-161 / DSM 6008 / Z-2901).